Here is a 471-residue protein sequence, read N- to C-terminus: ATP synthase subunit beta (471 aa).

152 to 159 contributes to the ATP binding site; sequence GGAGVGKT.

Belongs to the ATPase alpha/beta chains family. F-type ATPases have 2 components, CF(1) - the catalytic core - and CF(0) - the membrane proton channel. CF(1) has five subunits: alpha(3), beta(3), gamma(1), delta(1), epsilon(1). CF(0) has three main subunits: a(1), b(2) and c(9-12). The alpha and beta chains form an alternating ring which encloses part of the gamma chain. CF(1) is attached to CF(0) by a central stalk formed by the gamma and epsilon chains, while a peripheral stalk is formed by the delta and b chains.

It is found in the cell membrane. The enzyme catalyses ATP + H2O + 4 H(+)(in) = ADP + phosphate + 5 H(+)(out). Its function is as follows. Produces ATP from ADP in the presence of a proton gradient across the membrane. The catalytic sites are hosted primarily by the beta subunits. In Herpetosiphon aurantiacus (Herpetosiphon giganteus), this protein is ATP synthase subunit beta.